The following is a 521-amino-acid chain: Amidase (521 aa).

Residues K96 and S171 each act as charge relay system in the active site. Residues 155 to 174 (SGPVRNPWDRQREAGGSSGG) are disordered. Residue S195 is the Acyl-ester intermediate of the active site.

Belongs to the amidase family. As to quaternary structure, homodimer.

The enzyme catalyses a monocarboxylic acid amide + H2O = a monocarboxylate + NH4(+). Its function is as follows. Hydrolyzes propionamides efficiently, and also at a lower efficiency, acetamide, acrylamide and indoleacetamide. This enzyme seems to be stereospecific and can lead to the production of a single enantiomer. This chain is Amidase (amdA), found in Rhodococcus erythropolis (Arthrobacter picolinophilus).